We begin with the raw amino-acid sequence, 331 residues long: Homeobox protein DBX1 (331 aa).

Disordered stretches follow at residues 56–94 (RAVP…ISSN) and 232–331 (KERE…ITVS). Residues 173 to 232 (GMLRRAVFSDVQRKALEKMFQKQKYISKPDRKKLAGKLGLKDSQVKIWFQNRRMKWRNSK) constitute a DNA-binding region (homeobox). Basic and acidic residues predominate over residues 256-266 (DLSDVSKKSSG). A compositionally biased stretch (low complexity) spans 299 to 314 (PSSPFNSSSASKPSDF). Residues 315-331 (SDSEEEGGEQEEEITVS) are compositionally biased toward acidic residues.

This sequence belongs to the H2.0 homeobox family.

The protein resides in the nucleus. In terms of biological role, may function within the midpoint progenitor population to inhibit neuronal differentiation, possibly through modulating the function of Xash3. This Xenopus laevis (African clawed frog) protein is Homeobox protein DBX1 (dbx1).